A 403-amino-acid polypeptide reads, in one-letter code: MSQQDRVAPQDQDSFLDDQPGVRPIPSFDDMPLHQNLLRGIYSYGFEKPSSIQQRAIAPFTRGGDIIAQAQSGTGKTGAFSIGLLQRLDFRHNLIQGLVLSPTRELALQTAEVISRIGEFLSNSAKFCETFVGGTRVQDDLRKLQAGVVVAVGTPGRVSDVIKRGALRTESLRVLVLDEADEMLSQGFADQIYEIFRFLPKDIQVALFSATMPEEVLELTKKFMRDPVRILVKRESLTLEGIKQFFIAVEEEHKLDTLMDLYETVSIAQSVIFANTRRKVDWIAEKLNQSNHTVSSMHAEMPKSDRERVMNTFRSGSSRVLVTTDLVARGIDVHHVNIVINFDLPTNKENYLHRIGRGGRYGRKGVAINFVTEKDVELLHEIEGHYHTQIDELPVDFAAYLGE.

The tract at residues 1–29 is disordered; sequence MSQQDRVAPQDQDSFLDDQPGVRPIPSFD. Residues 26–54 carry the Q motif motif; the sequence is PSFDDMPLHQNLLRGIYSYGFEKPSSIQQ. A Helicase ATP-binding domain is found at 57–230; sequence IAPFTRGGDI…KKFMRDPVRI (174 aa). An ATP-binding site is contributed by 70–77; it reads AQSGTGKT. The short motif at 178–181 is the DEAD box element; it reads DEAD. One can recognise a Helicase C-terminal domain in the interval 241 to 401; it reads GIKQFFIAVE…ELPVDFAAYL (161 aa).

The protein belongs to the DEAD box helicase family. eIF4A subfamily. In terms of assembly, eIF4F is a multi-subunit complex, the composition of which varies with external and internal environmental conditions. It is composed of at least EIF4A, EIF4E and EIF4G.

The catalysed reaction is ATP + H2O = ADP + phosphate + H(+). Functionally, ATP-dependent RNA helicase which is a subunit of the eIF4F complex involved in cap recognition and is required for mRNA binding to ribosome. In the current model of translation initiation, eIF4A unwinds RNA secondary structures in the 5'-UTR of mRNAs which is necessary to allow efficient binding of the small ribosomal subunit, and subsequent scanning for the initiator codon. The sequence is that of Probable eukaryotic initiation factor 4A from Leishmania braziliensis.